Reading from the N-terminus, the 859-residue chain is Leucine--tRNA ligase (859 aa).

Positions Pro-42–His-52 match the 'HIGH' region motif. Positions Lys-618–Ser-622 match the 'KMSKS' region motif. An ATP-binding site is contributed by Lys-621.

The protein belongs to the class-I aminoacyl-tRNA synthetase family.

Its subcellular location is the cytoplasm. It catalyses the reaction tRNA(Leu) + L-leucine + ATP = L-leucyl-tRNA(Leu) + AMP + diphosphate. In Shewanella baltica (strain OS223), this protein is Leucine--tRNA ligase.